Reading from the N-terminus, the 202-residue chain is Oocyte-secreted protein 1 (202 aa).

A signal peptide spans methionine 1–alanine 21. The disordered stretch occupies residues glutamine 157–alanine 183.

This sequence belongs to the PLAC1 family. In terms of tissue distribution, expressed in oocytes in primary through antral-stage follicles. Expressed in liver and ovary.

The protein resides in the secreted. May be involved in cell differentiation. This chain is Oocyte-secreted protein 1 (Oosp1), found in Mus musculus (Mouse).